The following is a 232-amino-acid chain: Syntaxin-51 (232 aa).

Residues 1-208 (MASSSDSWMR…NKNMRSGCSC (208 aa)) are Cytoplasmic-facing. One can recognise a t-SNARE coiled-coil homology domain in the interval 136–198 (RQVMREQDEG…RRVQKSLAVM (63 aa)). Residues 209–229 (MSMLLSVLGIVGLAVVIWMLV) traverse the membrane as a helical; Anchor for type IV membrane protein segment. Residues 230–232 (KYM) lie on the Vesicular side of the membrane.

This sequence belongs to the syntaxin family. Interacts with VTI11 and either SYP21, or SYP22, or SYP61 in the prevacuolar compartment, or with VTI12 and SYP61 in the trans-Golgi network to form t-SNARE complexes. Expressed in root, leaf, stem, flower and silique.

It localises to the golgi apparatus. The protein localises to the trans-Golgi network membrane. Its subcellular location is the prevacuolar compartment membrane. Functionally, vesicle trafficking protein that functions in the secretory pathway. This is Syntaxin-51 (SYP51) from Arabidopsis thaliana (Mouse-ear cress).